The chain runs to 451 residues: UDP-glycosyltransferase 76E11 (451 aa).

UDP-alpha-D-glucose is bound by residues Ser-273, 332-334 (APQ), 349-357 (HCGWNSTLE), and 371-374 (SSDQ).

Belongs to the UDP-glycosyltransferase family.

Its function is as follows. Possesses low quercetin 3-O-glucosyltransferase and 7-O-glucosyltransferase activities in vitro. The sequence is that of UDP-glycosyltransferase 76E11 (UGT76E11) from Arabidopsis thaliana (Mouse-ear cress).